A 443-amino-acid chain; its full sequence is Glutamate-1-semialdehyde 2,1-aminomutase (443 aa).

The residue at position 272 (Lys-272) is an N6-(pyridoxal phosphate)lysine.

Belongs to the class-III pyridoxal-phosphate-dependent aminotransferase family. HemL subfamily. In terms of assembly, homodimer. Pyridoxal 5'-phosphate is required as a cofactor.

The protein resides in the cytoplasm. The catalysed reaction is (S)-4-amino-5-oxopentanoate = 5-aminolevulinate. The protein operates within porphyrin-containing compound metabolism; protoporphyrin-IX biosynthesis; 5-aminolevulinate from L-glutamyl-tRNA(Glu): step 2/2. It participates in porphyrin-containing compound metabolism; chlorophyll biosynthesis. This Chloroflexus aurantiacus (strain ATCC 29366 / DSM 635 / J-10-fl) protein is Glutamate-1-semialdehyde 2,1-aminomutase.